Here is a 311-residue protein sequence, read N- to C-terminus: Methionyl-tRNA formyltransferase (311 aa).

Position 110 to 113 (110 to 113) interacts with (6S)-5,6,7,8-tetrahydrofolate; that stretch reads SLLP.

Belongs to the Fmt family.

It carries out the reaction L-methionyl-tRNA(fMet) + (6R)-10-formyltetrahydrofolate = N-formyl-L-methionyl-tRNA(fMet) + (6S)-5,6,7,8-tetrahydrofolate + H(+). Its function is as follows. Attaches a formyl group to the free amino group of methionyl-tRNA(fMet). The formyl group appears to play a dual role in the initiator identity of N-formylmethionyl-tRNA by promoting its recognition by IF2 and preventing the misappropriation of this tRNA by the elongation apparatus. The chain is Methionyl-tRNA formyltransferase from Streptococcus pyogenes serotype M6 (strain ATCC BAA-946 / MGAS10394).